A 1052-amino-acid polypeptide reads, in one-letter code: SE-cephalotoxin (1052 aa).

Positions 1-21 (MMGTSRCVILLFALLLWAANA) are cleaved as a signal peptide. Positions 22 to 29 (APPEIHTT) are excised as a propeptide. N-linked (GlcNAc...) asparagine glycosylation is present at N41. Residues 130-194 (TGVNRKLDQI…DMNKRRLMAE (65 aa)) adopt a coiled-coil conformation. An N-linked (GlcNAc...) asparagine glycan is attached at N353. Residues 460-497 (PGNPCNHGCNGHGECKVVPYTDQFQCFCHGNYEGKMCQ) form the EGF-like domain. 3 disulfides stabilise this stretch: C464–C474, C468–C485, and C487–C496. N-linked (GlcNAc...) asparagine glycans are attached at residues N576 and N715. Residues 709 to 769 (TSCPPLNVTH…QWSATPKCES (61 aa)) enclose the Sushi domain. 7 disulfides stabilise this stretch: C711–C752, C739–C767, C780–C814, C784–C820, C795–C804, C829–C847, and C841–C858. The region spanning 768 to 821 (ESSWSRWSKWSACASTCGNATQSRRRRCLGQSESEKCIGPSKQVRKCFVEDCCQ) is the TSP type-1 domain. N786 is a glycosylation site (N-linked (GlcNAc...) asparagine). The LDL-receptor class A domain maps to 819-859 (CCQEKYGKFKCDNNKCISLSRVCDGNDDCRNAEDESKSRCK).

In terms of assembly, monomer. Expressed by the salivary gland.

It is found in the secreted. The protein is SE-cephalotoxin of Acanthosepion esculentum (Golden cuttlefish).